The chain runs to 214 residues: Coiled-coil domain-containing protein 169 (214 aa).

The stretch at 29 to 154 (DAVQLSIFEL…NERRTYLAEM (126 aa)) forms a coiled coil. Positions 155–170 (SQGSGLHQVSKRQQVD) are enriched in polar residues. Residues 155–214 (SQGSGLHQVSKRQQVDQLPRMQENLVKTGRYNPAKQKTVSAKRGPVKKITRPNHLPELHP) are disordered.

Belongs to the CCDC169 family.

The chain is Coiled-coil domain-containing protein 169 (CCDC169) from Homo sapiens (Human).